The chain runs to 235 residues: tRNA1(Val) (adenine(37)-N6)-methyltransferase (235 aa).

It belongs to the methyltransferase superfamily. tRNA (adenine-N(6)-)-methyltransferase family.

It localises to the cytoplasm. The catalysed reaction is adenosine(37) in tRNA1(Val) + S-adenosyl-L-methionine = N(6)-methyladenosine(37) in tRNA1(Val) + S-adenosyl-L-homocysteine + H(+). Its function is as follows. Specifically methylates the adenine in position 37 of tRNA(1)(Val) (anticodon cmo5UAC). This is tRNA1(Val) (adenine(37)-N6)-methyltransferase from Glaesserella parasuis serovar 5 (strain SH0165) (Haemophilus parasuis).